The primary structure comprises 270 residues: Methylthioribulose-1-phosphate dehydratase (270 aa).

Cys-122 provides a ligand contact to substrate. Zn(2+)-binding residues include His-140 and His-142. Glu-165 serves as the catalytic Proton donor/acceptor. Zn(2+) is bound at residue His-230.

It belongs to the aldolase class II family. MtnB subfamily. The cofactor is Zn(2+).

It localises to the cytoplasm. It carries out the reaction 5-(methylsulfanyl)-D-ribulose 1-phosphate = 5-methylsulfanyl-2,3-dioxopentyl phosphate + H2O. It participates in amino-acid biosynthesis; L-methionine biosynthesis via salvage pathway; L-methionine from S-methyl-5-thio-alpha-D-ribose 1-phosphate: step 2/6. In terms of biological role, catalyzes the dehydration of methylthioribulose-1-phosphate (MTRu-1-P) into 2,3-diketo-5-methylthiopentyl-1-phosphate (DK-MTP-1-P). In Candida albicans (strain SC5314 / ATCC MYA-2876) (Yeast), this protein is Methylthioribulose-1-phosphate dehydratase.